A 263-amino-acid polypeptide reads, in one-letter code: Rano class II histocompatibility antigen, B-1 beta chain (263 aa).

The first 27 residues, 1-27 (MALQTPSFLLPAAVVVLMVLSSPGTEG), serve as a signal peptide directing secretion. A beta-1 region spans residues 28–120 (RDSPRDFVYQ…SEVRTSLRRL (93 aa)). Over 28-224 (RDSPRDFVYQ…RAQSESAQSK (197 aa)) the chain is Extracellular. 2 disulfide bridges follow: cysteine 42/cysteine 104 and cysteine 143/cysteine 199. N-linked (GlcNAc...) asparagine glycosylation occurs at asparagine 46. The beta-2 stretch occupies residues 121–214 (EQPNVAISLS…SLESPVTVEW (94 aa)). One can recognise an Ig-like C1-type domain in the interval 123–211 (PNVAISLSRT…DHPSLESPVT (89 aa)). Positions 215-224 (RAQSESAQSK) are connecting peptide. The helical transmembrane segment at 225 to 245 (MLSGIGGFVLGVIFLGLGLFI) threads the bilayer. Over 246-263 (RHKRQKGPRGPPPAGLLQ) the chain is Cytoplasmic. Lysine 251 is covalently cross-linked (Glycyl lysine isopeptide (Lys-Gly) (interchain with G-Cter in ubiquitin)).

The protein belongs to the MHC class II family.

The protein localises to the membrane. In terms of biological role, involved in the presentation of foreign antigens to the immune system. The polypeptide is Rano class II histocompatibility antigen, B-1 beta chain (RT1-Bb) (Rattus norvegicus (Rat)).